A 921-amino-acid chain; its full sequence is Ribosome-releasing factor 2, mitochondrial (921 aa).

Residues 1–55 constitute a mitochondrion transit peptide; the sequence is MVSALLLRARQNGRAARCLDYPKVKCWALASLPKSSLEKPGFSQVRRFSVFHPQS. Positions 60 to 368 constitute a tr-type G domain; that stretch reads DLTRNIGIIA…SVVDLLPSPQ (309 aa). GTP is bound by residues 69–76, 152–156, and 206–209; these read AHIDAGKT, DTPGH, and NKMD.

The protein belongs to the TRAFAC class translation factor GTPase superfamily. Classic translation factor GTPase family. EF-G/EF-2 subfamily.

The protein resides in the mitochondrion. Its function is as follows. Mitochondrial GTPase that mediates the disassembly of ribosomes from messenger RNA at the termination of mitochondrial protein biosynthesis. Not involved in the GTP-dependent ribosomal translocation step during translation elongation. This is Ribosome-releasing factor 2, mitochondrial (mef2) from Emericella nidulans (strain FGSC A4 / ATCC 38163 / CBS 112.46 / NRRL 194 / M139) (Aspergillus nidulans).